The primary structure comprises 118 residues: Non-specific lipid-transfer protein 3 (118 aa).

Residues 1–25 (MARAAATQLVLVAMVAAMLLVATDA) form the signal peptide. 4 disulfides stabilise this stretch: cysteine 29/cysteine 77, cysteine 39/cysteine 54, cysteine 55/cysteine 100, and cysteine 75/cysteine 114.

The protein belongs to the plant LTP family.

In terms of biological role, plant non-specific lipid-transfer proteins transfer phospholipids as well as galactolipids across membranes. May play a role in wax or cutin deposition in the cell walls of expanding epidermal cells and certain secretory tissues. This chain is Non-specific lipid-transfer protein 3 (LTP3), found in Hordeum vulgare (Barley).